We begin with the raw amino-acid sequence, 54 residues long: Ovomucoid (54 aa).

The 51-residue stretch at 4–54 (VDCSDYPKPACTVEYMPLCGSDNKTYDNKCNFCNAVVDSNGTLTLSHFGKC) folds into the Kazal-like domain. Cystine bridges form between cysteine 6–cysteine 36, cysteine 14–cysteine 33, and cysteine 22–cysteine 54. The N-linked (GlcNAc...) asparagine glycan is linked to asparagine 43.

The protein localises to the secreted. This is Ovomucoid from Anser anser anser (Western greylag goose).